The primary structure comprises 60 residues: Protein CADMIUM TOLERANCE 4 (60 aa).

A helical transmembrane segment spans residues 26-42 (GFLYACLFMLCCCFCCY).

The protein belongs to the CYSTM1 family. In terms of tissue distribution, mainly expressed in shoots, and, to a lower extent, in roots.

Its subcellular location is the cell membrane. The protein resides in the secreted. It localises to the cell wall. Functionally, confers resistance to heavy metal ions (e.g. aluminium (Al)) by chelating them at the plasma membrane of root cells, thus stopping their entry and reducing their accumulation. The polypeptide is Protein CADMIUM TOLERANCE 4 (Oryza sativa subsp. japonica (Rice)).